The following is a 164-amino-acid chain: UPF0304 protein PC1_2778 (164 aa).

Belongs to the UPF0304 family.

The protein is UPF0304 protein PC1_2778 of Pectobacterium carotovorum subsp. carotovorum (strain PC1).